We begin with the raw amino-acid sequence, 384 residues long: Surfeit locus protein 1-like (384 aa).

3 helical membrane-spanning segments follow: residues 55–75, 302–322, and 338–358; these read ALLW…YKFL, IPLD…TCFI, and IGVE…TKIY.

Belongs to the SURF1 (TC 3.D.4.8) family.

The protein resides in the mitochondrion inner membrane. Its function is as follows. May be involved in the biogenesis of the COX complex. The protein is Surfeit locus protein 1-like of Arabidopsis thaliana (Mouse-ear cress).